We begin with the raw amino-acid sequence, 512 residues long: Catalase (512 aa).

Active-site residues include His-60 and Asn-133. Heme is bound at residue Tyr-344. Position 363 is a phosphoserine (Ser-363). The span at 488–505 (EVKKMEEKAPKPINKGEP) shows a compositional bias: basic and acidic residues. Residues 488-512 (EVKKMEEKAPKPINKGEPHMFQGSS) are disordered.

It belongs to the catalase family. Heme serves as cofactor.

The protein localises to the peroxisome matrix. The enzyme catalyses 2 H2O2 = O2 + 2 H2O. In terms of biological role, catalyzes the degradation of hydrogen peroxide (H(2)O(2)) generated by peroxisomal oxidases to water and oxygen, thereby protecting cells from the toxic effects of hydrogen peroxide. This chain is Catalase (cta1), found in Schizosaccharomyces pombe (strain 972 / ATCC 24843) (Fission yeast).